The primary structure comprises 293 residues: MNEQELKQMIEGILTEMSGGKTTDTVAAAPTKSVVETVVTEGSIPDITEVDIKKQLLVPEPADREGYLKMKQMTPARLGLWRAGPRYKTETILRFRADHAVAQDSVFSYVSEDLVKEMNFIPVNTKCQDKDEYLTRPDLGREFDNEMVEVIRANTTKNAKLQIVVGDGLSSAAIEANIKDILPSIKQGLKMYNLDFDNIIFVKHCRVPSMDQIGEITGADVVCLLVGERPGLVTAESMSAYIAYKPTIGMPEARRTVISNIHSGGTPPVEAGAYIAELIHNMLEKKCSGIDLK.

The adenosylcob(III)alamin site is built by valine 207 and glutamate 228.

The protein belongs to the EutC family. In terms of assembly, the basic unit is a heterodimer which dimerizes to form tetramers. The heterotetramers trimerize; 6 large subunits form a core ring with 6 small subunits projecting outwards. The cofactor is adenosylcob(III)alamin.

It is found in the bacterial microcompartment. The enzyme catalyses ethanolamine = acetaldehyde + NH4(+). It functions in the pathway amine and polyamine degradation; ethanolamine degradation. Its function is as follows. Catalyzes the deamination of various vicinal amino-alcohols to oxo compounds. Allows this organism to utilize ethanolamine as the sole source of nitrogen and carbon in the presence of external vitamin B12. This is Ethanolamine ammonia-lyase small subunit from Listeria monocytogenes serotype 4a (strain HCC23).